We begin with the raw amino-acid sequence, 1217 residues long: ATP-dependent helicase/nuclease subunit A (1217 aa).

A UvrD-like helicase ATP-binding domain is found at 10–475 (VIWTDAQWQS…MDLSQNFRSR (466 aa)). An ATP-binding site is contributed by 31–38 (AAAGSGKT). The 296-residue stretch at 491-786 (DEQVGEVNYD…RMMTIHSSKG (296 aa)) folds into the UvrD-like helicase C-terminal domain.

The protein belongs to the helicase family. AddA subfamily. Heterodimer of AddA and AddB/RexB. It depends on Mg(2+) as a cofactor.

The catalysed reaction is Couples ATP hydrolysis with the unwinding of duplex DNA by translocating in the 3'-5' direction.. It catalyses the reaction ATP + H2O = ADP + phosphate + H(+). The heterodimer acts as both an ATP-dependent DNA helicase and an ATP-dependent, dual-direction single-stranded exonuclease. Recognizes the chi site generating a DNA molecule suitable for the initiation of homologous recombination. The AddA nuclease domain is required for chi fragment generation; this subunit has the helicase and 3' -&gt; 5' nuclease activities. The protein is ATP-dependent helicase/nuclease subunit A of Staphylococcus aureus (strain bovine RF122 / ET3-1).